Reading from the N-terminus, the 261-residue chain is MRILITNDDGINAPGLEVLEQIALQLAGPDGEVWTVAPAFEQSGVSHAISYTHPMMIAKLGPRRYAAEGSPADCVLAALYDVLQGARPDLVLSGVNRGNNSAENVLYSGTVGGALEAALQGLPAIALSQFLGPETEGLADPFECARTHGARIVRLLLERGLWDGEDYRLFYNVNFPPVPAANLRGHRVAAQGFRRDTSFGVEPHMSPSGRRFLWIRGGAQQSPTLPGTDAAVNLEGFVSITPLRADLTAHDRLAELEALIG.

Residues aspartate 8, aspartate 9, serine 43, and asparagine 96 each coordinate a divalent metal cation.

The protein belongs to the SurE nucleotidase family. A divalent metal cation is required as a cofactor.

The protein localises to the cytoplasm. The enzyme catalyses a ribonucleoside 5'-phosphate + H2O = a ribonucleoside + phosphate. Functionally, nucleotidase that shows phosphatase activity on nucleoside 5'-monophosphates. This chain is 5'-nucleotidase SurE, found in Cereibacter sphaeroides (strain ATCC 17029 / ATH 2.4.9) (Rhodobacter sphaeroides).